We begin with the raw amino-acid sequence, 605 residues long: Probable serine/threonine-protein kinase DDB_G0286481 (605 aa).

A helical membrane pass occupies residues 5–25; the sequence is YQIFFLLYLLCILYVISCGYI. The N-linked (GlcNAc...) asparagine glycan is linked to asparagine 53. Composition is skewed to low complexity over residues 54–81 and 89–104; these read SSNN…NNNN and NCNN…NKSN. A disordered region spans residues 54–170; it reads SSNNNNNNNN…LGGSMGSGSQ (117 aa). 4 N-linked (GlcNAc...) asparagine glycosylation sites follow: asparagine 92, asparagine 93, asparagine 97, and asparagine 101. The segment covering 105–123 has biased composition (basic residues); that stretch reads IKNKQHHHHSNFRNRRGKS. An N-linked (GlcNAc...) asparagine glycan is attached at asparagine 127. Polar residues predominate over residues 144 to 155; the sequence is QSSSYDTSELHQ. N-linked (GlcNAc...) asparagine glycosylation is present at asparagine 280. In terms of domain architecture, Protein kinase spans 312–597; that stretch reads YEVIQKIGRG…AKEAMKHPYF (286 aa). ATP is bound by residues 318-326 and lysine 341; that span reads IGRGKYSEV. Asparagine 390 is a glycosylation site (N-linked (GlcNAc...) asparagine). The active-site Proton acceptor is aspartate 429. A glycan (N-linked (GlcNAc...) asparagine) is linked at asparagine 601.

It belongs to the protein kinase superfamily. CMGC Ser/Thr protein kinase family.

It localises to the membrane. It catalyses the reaction L-seryl-[protein] + ATP = O-phospho-L-seryl-[protein] + ADP + H(+). The enzyme catalyses L-threonyl-[protein] + ATP = O-phospho-L-threonyl-[protein] + ADP + H(+). The polypeptide is Probable serine/threonine-protein kinase DDB_G0286481 (Dictyostelium discoideum (Social amoeba)).